Consider the following 221-residue polypeptide: Mitochondrial cardiolipin hydrolase (221 aa).

Residues 1 to 4 (MGRS) are Mitochondrial intermembrane-facing. The segment at 1–38 (MGRSSWRLVFAAGAGLALALEALPWLMRWLLAGRRPRR) is required for mitochondrial localization. Residues 5–27 (SWRLVFAAGAGLALALEALPWLM) form a helical membrane-spanning segment. Over 28 to 221 (RWLLAGRRPR…SFFPQKHRGH (194 aa)) the chain is Cytoplasmic. A C3H1-type; atypical zinc finger spans residues 44-75 (PSQVTCTEALLQAPGLPPGPSGCPCSLPHSES). Residues 148–175 (DLGYMHHKFAIVDKKVLITGSLNWTTQA) form the PLD phosphodiesterase domain. Catalysis depends on residues His-153, Lys-155, and Asp-160.

This sequence belongs to the phospholipase D family. MitoPLD/Zucchini subfamily. In terms of assembly, homodimer. Interacts with MOV10L1. Interacts with MIGA1 and MIGA2; possibly facilitating homodimer formation. Interacts with GK2. As to expression, predominantly expressed in testis (at protein level) and in growing ovary. Also expressed in the brain, eye and urinary bladder (at protein level), but its levels were low or undetectable in other organs.

It is found in the mitochondrion outer membrane. Its subcellular location is the nucleus membrane. It localises to the cell membrane. The protein resides in the golgi apparatus. The catalysed reaction is a cardiolipin + H2O = a 1,2-diacyl-sn-glycero-3-phospho-(1'-sn-glycerol) + a 1,2-diacyl-sn-glycero-3-phosphate + H(+). Single stranded DNA (ssDNA) hydrolase activity does not depend upon, but is stimulated by the presence of Ca(2+) and Mn(2+). MIGA1 and MIGA2 increase PLD6 self-association affinity and affects the homodimer conformation facilitating its phospholipase activity over the nuclease activity. MYC induces its expression and stimulates its phospholipase activity. In terms of biological role, presents phospholipase and nuclease activities, depending on the different physiological conditions. Interaction with Mitoguardin (MIGA1 or MIGA2) affects the dimer conformation, facilitating the lipase activity over the nuclease activity. Plays a key role in mitochondrial fusion and fission via its phospholipase activity. In its phospholipase role, it uses the mitochondrial lipid cardiolipin as substrate to generate phosphatidate (PA or 1,2-diacyl-sn-glycero-3-phosphate), a second messenger signaling lipid. Production of PA facilitates Mitofusin-mediated fusion, whereas the cleavage of PA by the Lipin family of phosphatases produces diacylgycerol (DAG) which promotes mitochondrial fission. Both Lipin and DAG regulate mitochondrial dynamics and membrane fusion/fission, important processes for adapting mitochondrial metabolism to changes in cell physiology. Mitochondrial fusion enables cells to cope with the increased nucleotide demand during DNA synthesis. Mitochondrial function and dynamics are closely associated with biological processes such as cell growth, proliferation, and differentiation. Mediator of MYC activity, promotes mitochondrial fusion and activates AMPK which in turn inhibits YAP/TAZ, thereby inducing cell growth and proliferation. The endonuclease activity plays a critical role in PIWI-interacting RNA (piRNA) biogenesis during spermatogenesis. Implicated in spermatogenesis and sperm fertility in testicular germ cells, its single strand-specific nuclease activity is critical for the biogenesis/maturation of PIWI-interacting RNA (piRNA). MOV10L1 selectively binds to piRNA precursors and funnels them to the endonuclease that catalyzes the first cleavage step of piRNA processing to generate piRNA intermediate fragments that are subsequently loaded to Piwi proteins. Cleaves either DNA or RNA substrates with similar affinity, producing a 5' phosphate end, in this way it participates in the processing of primary piRNA transcripts. piRNAs provide essential protection against the activity of mobile genetic elements. piRNA-mediated transposon silencing is thus critical for maintaining genome stability, in particular in germline cells when transposons are mobilized as a consequence of wide-spread genomic demethylation. PA may act as signaling molecule in the recognition/transport of the precursor RNAs of primary piRNAs. Interacts with tesmin in testes, suggesting a role in spermatogenesis via association with its interacting partner. The sequence is that of Mitochondrial cardiolipin hydrolase (Pld6) from Mus musculus (Mouse).